Consider the following 510-residue polypeptide: NAD(P)H-quinone oxidoreductase subunit 2 A, chloroplastic (510 aa).

Helical transmembrane passes span 24-44 (LLLF…GLIL), 57-77 (IPWL…ALLF), 99-119 (IFQF…VEYI), 124-144 (MAIT…MFLC), 149-169 (LITI…LSGY), 183-203 (YLLM…WLYG), 227-247 (PGIS…LSPA), 295-315 (WHLL…LIAI), 323-343 (MLAY…IVGD), 354-374 (YMLF…SFGL), 395-415 (ALSL…AGFF), 418-438 (LHLF…IGLL), and 484-504 (MIVC…IIAI).

Belongs to the complex I subunit 2 family. As to quaternary structure, NDH is composed of at least 16 different subunits, 5 of which are encoded in the nucleus.

It localises to the plastid. The protein resides in the chloroplast thylakoid membrane. It carries out the reaction a plastoquinone + NADH + (n+1) H(+)(in) = a plastoquinol + NAD(+) + n H(+)(out). It catalyses the reaction a plastoquinone + NADPH + (n+1) H(+)(in) = a plastoquinol + NADP(+) + n H(+)(out). Functionally, NDH shuttles electrons from NAD(P)H:plastoquinone, via FMN and iron-sulfur (Fe-S) centers, to quinones in the photosynthetic chain and possibly in a chloroplast respiratory chain. The immediate electron acceptor for the enzyme in this species is believed to be plastoquinone. Couples the redox reaction to proton translocation, and thus conserves the redox energy in a proton gradient. This is NAD(P)H-quinone oxidoreductase subunit 2 A, chloroplastic from Vitis vinifera (Grape).